The chain runs to 171 residues: Lipoprotein signal peptidase (171 aa).

3 helical membrane-spanning segments follow: residues Ser-8–Val-28, Trp-64–Leu-84, and Ser-96–Val-118. Catalysis depends on residues Asp-120 and Asp-138. Residues Val-133–Phe-153 traverse the membrane as a helical segment.

Belongs to the peptidase A8 family.

It is found in the cell inner membrane. It carries out the reaction Release of signal peptides from bacterial membrane prolipoproteins. Hydrolyzes -Xaa-Yaa-Zaa-|-(S,diacylglyceryl)Cys-, in which Xaa is hydrophobic (preferably Leu), and Yaa (Ala or Ser) and Zaa (Gly or Ala) have small, neutral side chains.. It participates in protein modification; lipoprotein biosynthesis (signal peptide cleavage). This protein specifically catalyzes the removal of signal peptides from prolipoproteins. The sequence is that of Lipoprotein signal peptidase from Haemophilus influenzae (strain 86-028NP).